Reading from the N-terminus, the 256-residue chain is Small ribosomal subunit protein eS1 (256 aa).

Residues Met-1–Lys-18 show a composition bias toward basic residues. Positions Met-1–Val-21 are disordered. Ala-2 carries the N-acetylalanine; partial modification.

The protein belongs to the eukaryotic ribosomal protein eS1 family. As to quaternary structure, component of the small ribosomal subunit. Mature ribosomes consist of a small (40S) and a large (60S) subunit. The 40S subunit contains about 33 different proteins and 1 molecule of RNA (18S). The 60S subunit contains about 49 different proteins and 3 molecules of RNA (25S, 5.8S and 5S).

Its subcellular location is the cytoplasm. The chain is Small ribosomal subunit protein eS1 (rps1) from Neosartorya fischeri (strain ATCC 1020 / DSM 3700 / CBS 544.65 / FGSC A1164 / JCM 1740 / NRRL 181 / WB 181) (Aspergillus fischerianus).